A 387-amino-acid chain; its full sequence is Acetylornithine deacetylase (387 aa).

Histidine 80 serves as a coordination point for Zn(2+). Aspartate 82 is a catalytic residue. Residue aspartate 112 participates in Zn(2+) binding. Glutamate 144 is a catalytic residue. Zn(2+) contacts are provided by glutamate 145, glutamate 169, and histidine 355.

It belongs to the peptidase M20A family. ArgE subfamily. In terms of assembly, homodimer. Zn(2+) is required as a cofactor. Co(2+) serves as cofactor. It depends on glutathione as a cofactor.

The protein localises to the cytoplasm. The enzyme catalyses N(2)-acetyl-L-ornithine + H2O = L-ornithine + acetate. It participates in amino-acid biosynthesis; L-arginine biosynthesis; L-ornithine from N(2)-acetyl-L-ornithine (linear): step 1/1. Catalyzes the hydrolysis of the amide bond of N(2)-acetylated L-amino acids. Cleaves the acetyl group from N-acetyl-L-ornithine to form L-ornithine, an intermediate in L-arginine biosynthesis pathway, and a branchpoint in the synthesis of polyamines. This Proteus mirabilis (strain HI4320) protein is Acetylornithine deacetylase.